The sequence spans 394 residues: Elongation factor Tu (394 aa).

Positions 10 to 205 constitute a tr-type G domain; that stretch reads KPHMNVGTIG…SMDNYFDLPE (196 aa). Positions 19-26 are G1; sequence GHVDHGKT. Residue 19 to 26 participates in GTP binding; it reads GHVDHGKT. Threonine 26 serves as a coordination point for Mg(2+). The G2 stretch occupies residues 61 to 65; the sequence is GITIN. Positions 82–85 are G3; it reads DCPG. GTP is bound by residues 82–86 and 137–140; these read DCPGH and NKLD. A G4 region spans residues 137–140; the sequence is NKLD. The interval 173–175 is G5; it reads SAF.

Belongs to the TRAFAC class translation factor GTPase superfamily. Classic translation factor GTPase family. EF-Tu/EF-1A subfamily. Monomer.

The protein resides in the cytoplasm. The enzyme catalyses GTP + H2O = GDP + phosphate + H(+). Functionally, GTP hydrolase that promotes the GTP-dependent binding of aminoacyl-tRNA to the A-site of ribosomes during protein biosynthesis. The chain is Elongation factor Tu from Borreliella burgdorferi (strain ATCC 35210 / DSM 4680 / CIP 102532 / B31) (Borrelia burgdorferi).